A 316-amino-acid chain; its full sequence is Diacylglycerol kinase (316 aa).

The DAGKc domain occupies Met-1–Tyr-132. ATP-binding positions include Asn-10 to Gly-14, Thr-41, Gly-67 to Glu-73, and Thr-94. Mg(2+)-binding residues include Lys-213, Asp-216, and Tyr-218. Glu-273 functions as the Proton acceptor in the catalytic mechanism.

The protein belongs to the diacylglycerol/lipid kinase family. Homodimer. Requires Mg(2+) as cofactor.

It carries out the reaction a 1,2-diacyl-sn-glycerol + ATP = a 1,2-diacyl-sn-glycero-3-phosphate + ADP + H(+). In terms of biological role, catalyzes the phosphorylation of diacylglycerol (DAG) into phosphatidic acid. Is a key enzyme involved in the production of lipoteichoic acid by reintroducing DAG formed from the breakdown of membrane phospholipids into the phosphatidylglycerol biosynthetic pathway. This Staphylococcus epidermidis (strain ATCC 35984 / DSM 28319 / BCRC 17069 / CCUG 31568 / BM 3577 / RP62A) protein is Diacylglycerol kinase (dagK).